The sequence spans 3912 residues: Ubiquitin carboxyl-terminal hydrolase puf (3912 aa).

5 disordered regions span residues Ala101 to His172, Asn518 to Glu590, Asp660 to Asp688, Val851 to Ser878, and Ser1491 to Ser1611. Residues Glu106–Pro133 are compositionally biased toward basic and acidic residues. A compositionally biased stretch (low complexity) spans Ser134–Gly143. Residues Lys150–Thr164 show a composition bias toward pro residues. Low complexity predominate over residues Ser522–Ser532. Residues Ile576–Lys585 show a composition bias toward basic and acidic residues. Acidic residues predominate over residues Asp660–Ser687. Over residues Lys862–Gln876 the composition is skewed to polar residues. Positions Val1511 to Arg1520 are enriched in basic residues. The span at Thr1550–Gly1567 shows a compositional bias: polar residues. A compositionally biased stretch (basic and acidic residues) spans Lys1583–Pro1594. The segment covering Pro1600–Ala1609 has biased composition (pro residues). A USP domain is found at Val2015–Arg2380. Cys2024 serves as the catalytic Nucleophile. A compositionally biased stretch (basic and acidic residues) spans Tyr2249–Ala2263. A disordered region spans residues Tyr2249–Lys2274. Residue His2305 is the Proton acceptor of the active site. Disordered regions lie at residues Glu2391 to Ala2529, Gln3322 to Gln3344, Ser3657 to Glu3776, and Ala3800 to Ile3912. 2 stretches are compositionally biased toward basic and acidic residues: residues Val2402 to Lys2413 and Glu2433 to Thr2488. Over residues Asn2504 to Gln2523 the composition is skewed to low complexity. Positions Ser3657–Ser3703 are enriched in basic and acidic residues. Over residues Ser3706 to Lys3721 the composition is skewed to polar residues. The span at Ser3741–Leu3751 shows a compositional bias: acidic residues. Positions Thr3766–Glu3776 are enriched in basic and acidic residues. Residues Pro3865–Glu3877 are compositionally biased toward polar residues. The span at Ser3878–Ile3912 shows a compositional bias: low complexity.

It belongs to the peptidase C19 family. Interacts with Myc and ago.

It is found in the nucleus. The catalysed reaction is Thiol-dependent hydrolysis of ester, thioester, amide, peptide and isopeptide bonds formed by the C-terminal Gly of ubiquitin (a 76-residue protein attached to proteins as an intracellular targeting signal).. Its function is as follows. Ubiquitin hydrolase that can remove conjugated ubiquitin from target proteins and polyubiquitin chains. Essential for Myc-mediated cell growth and proliferation in developing eyes and wings. In the wing and eye, the deubiquitinating activity acts as an antagonist to the SCF E3 ubiquitin-protein ligase member archipelago (ago) to regulate Myc and CycE stability and thus control cell growth and proliferation. Also appears to regulate ago by modulating its induction by Myc. May also promote cell apoptosis in the wing imaginal disk, acting in an apoptotic pathway that appears to be largely independent of Myc. Required for preventing the activation of the immune deficiency (Imd) and Toll signaling cascades under unchallenged conditions. Also appears to be involved in modulating the differential expression of certain antimicrobial peptides (AMP) in response to infection by either Gram-positive or Gram-negative bacteria. Involved in the regulation of DNA damage repair pathways, including euchromatic site-specific double strand break (DSB) repair. In Drosophila melanogaster (Fruit fly), this protein is Ubiquitin carboxyl-terminal hydrolase puf.